A 468-amino-acid chain; its full sequence is MTSTEGILAGKYPAKAHARRVVEYLRQNGFEGDGVLYLEAQKTKMIEDNDSEQPFRQRRFFFYLSGCLLPDAHLTYHISSDKLALFIPPLDPESVIWSGLPLSPTQAKELYDVDEVLYTTDINPTLAHLASEVGTSGFVFAIDGQISDDISFKNFPETDLVALKTAIEECRVVKDAYEVAMIRKANDVTAQAHVAVLKATKSATNERELEAAFIGTCIAHGCREMAYHPIVASGTSSATLHYVNNDEPLIDLTTNKKKLNLLLDAAGEYKTYCADVTRTFPLSGKFSPESRQIYDIVLEMQTKSLAMLKEGVLWEDVHVTAHRVAIKGLLKLGILRGSEEELLEKRISVAFFPHGLGHYLGMDTHDTGGHANYADKDKMFRYLRVRGKLPAGSVITVEPGVYFCRFIIEPYLKDSELSKYIDADVLEKYWEVGGVRIEDNIHITKEGYDNLTTAPKTADQLELMINGS.

Aspartate 264, aspartate 275, glutamate 398, and glutamate 438 together coordinate Mn(2+).

The protein belongs to the peptidase M24B family. Requires Mn(2+) as cofactor.

It carries out the reaction Release of any N-terminal amino acid, including proline, that is linked to proline, even from a dipeptide or tripeptide.. Catalyzes the removal of a penultimate prolyl residue from the N-termini of peptides. The polypeptide is Probable Xaa-Pro aminopeptidase pepP (pepP) (Talaromyces stipitatus (strain ATCC 10500 / CBS 375.48 / QM 6759 / NRRL 1006) (Penicillium stipitatum)).